Here is a 210-residue protein sequence, read N- to C-terminus: NAD(P)H-quinone oxidoreductase subunit I (210 aa).

2 4Fe-4S ferredoxin-type domains span residues 54-83 and 94-123; these read GRIH…VDWV and YSYS…VTED. [4Fe-4S] cluster contacts are provided by cysteine 63, cysteine 66, cysteine 69, cysteine 73, cysteine 103, cysteine 106, cysteine 109, and cysteine 113.

This sequence belongs to the complex I 23 kDa subunit family. As to quaternary structure, NDH-1 is composed of at least 11 different subunits. [4Fe-4S] cluster is required as a cofactor.

It localises to the cellular thylakoid membrane. The catalysed reaction is a plastoquinone + NADH + (n+1) H(+)(in) = a plastoquinol + NAD(+) + n H(+)(out). It carries out the reaction a plastoquinone + NADPH + (n+1) H(+)(in) = a plastoquinol + NADP(+) + n H(+)(out). Its function is as follows. NDH-1 shuttles electrons from an unknown electron donor, via FMN and iron-sulfur (Fe-S) centers, to quinones in the respiratory and/or the photosynthetic chain. The immediate electron acceptor for the enzyme in this species is believed to be plastoquinone. Couples the redox reaction to proton translocation, and thus conserves the redox energy in a proton gradient. In Synechococcus sp. (strain JA-3-3Ab) (Cyanobacteria bacterium Yellowstone A-Prime), this protein is NAD(P)H-quinone oxidoreductase subunit I.